The following is a 787-amino-acid chain: Protocadherin beta-15 (787 aa).

The signal sequence occupies residues 1-26 (MEPAGERFPEQRQVLILLLLLEVTLA). At 27–690 (GWEPRRYSVM…AQADSLTVYL (664 aa)) the chain is on the extracellular side. Cadherin domains follow at residues 35–133 (VMEE…SPEF), 138–242 (MTLK…APEF), 247–347 (YEVQ…FPEL), 352–451 (LTSP…APAF), and 456–561 (YTLF…SPFV). N-linked (GlcNAc...) asparagine glycosylation occurs at N418. A glycan (N-linked (GlcNAc...) asparagine) is linked at N567. The 104-residue stretch at 568 to 671 (GSAPCTELVP…LVDGFSQPYL (104 aa)) folds into the Cadherin 6 domain. Residues 691–711 (VVALASVSSLFLFSVFLFVAV) form a helical membrane-spanning segment. The Cytoplasmic portion of the chain corresponds to 712–787 (RLCRRSRAAS…DSRRKSEFLE (76 aa)).

The protein localises to the cell membrane. In terms of biological role, potential calcium-dependent cell-adhesion protein. May be involved in the establishment and maintenance of specific neuronal connections in the brain. The chain is Protocadherin beta-15 (PCDHB15) from Homo sapiens (Human).